Here is a 364-residue protein sequence, read N- to C-terminus: Dihydroorotate dehydrogenase (quinone) (364 aa).

FMN-binding positions include 61 to 65 (AGFDK) and T85. Residue K65 coordinates substrate. 110 to 114 (NRMGF) lines the substrate pocket. Positions 139 and 170 each coordinate FMN. N170 is a substrate binding site. The active-site Nucleophile is the S173. N175 serves as a coordination point for substrate. FMN contacts are provided by K214 and A242. Residue 243–244 (NT) coordinates substrate. Residues G266, G295, and 316-317 (YS) contribute to the FMN site.

The protein belongs to the dihydroorotate dehydrogenase family. Type 2 subfamily. As to quaternary structure, monomer. The cofactor is FMN.

Its subcellular location is the cell membrane. The catalysed reaction is (S)-dihydroorotate + a quinone = orotate + a quinol. It functions in the pathway pyrimidine metabolism; UMP biosynthesis via de novo pathway; orotate from (S)-dihydroorotate (quinone route): step 1/1. Catalyzes the conversion of dihydroorotate to orotate with quinone as electron acceptor. The polypeptide is Dihydroorotate dehydrogenase (quinone) (Rhodopseudomonas palustris (strain TIE-1)).